The primary structure comprises 417 residues: RH-like protein IA (417 aa).

11 helical membrane passes run 12-32, 44-64, 77-97, 125-145, 172-192, 203-223, 238-258, 265-285, 287-307, 331-351, and 358-378; these read CLPLCALTLEAALILLFYFFT, LVASYQVGQDLTVMAAIGFGF, VAFSLFMLALGVQWAILLDGF, ISVDAVLGKVNLVQLVVMVLV, IYVFAAYFGLSVAWCLPKPLP, TIPSLSAMLGALFLWMFWPSF, VFNTYYAVAVSVVTAISGSSL, ISMSYMHNAVLAGGVAVGTSC, LITSPWLAMVLGLVAGLISIG, NFSLLGLLGEIIYIVLLVHHT, and MIGFQVLLRIGEFSLATTIAL.

The protein belongs to the ammonium transporter (TC 2.A.49) family. Rh subfamily.

It localises to the membrane. In terms of biological role, may be part of an oligomeric complex which is likely to have a transport or channel function in the erythrocyte membrane. The protein is RH-like protein IA of Pan troglodytes (Chimpanzee).